A 647-amino-acid polypeptide reads, in one-letter code: Type II methyltransferase M.FokI (647 aa).

Short sequence motifs (adenine-specific methylase) lie at residues 218 to 221 and 548 to 551; these read DPPY.

Belongs to the N(4)/N(6)-methyltransferase family. In terms of assembly, monomer.

The catalysed reaction is a 2'-deoxyadenosine in DNA + S-adenosyl-L-methionine = an N(6)-methyl-2'-deoxyadenosine in DNA + S-adenosyl-L-homocysteine + H(+). In terms of biological role, an alpha subtype methylase that recognizes the asymmetric double-stranded sequence 5'-GGATG-3', methylates A-3 of both strands, and protects the DNA from cleavage by the FokI endonuclease. This is Type II methyltransferase M.FokI from Planomicrobium okeanokoites (Planococcus okeanokoites).